The primary structure comprises 62 residues: DNA-directed RNA polymerase subunit Rpo10 (62 aa).

Residues cysteine 6, cysteine 9, cysteine 43, and cysteine 44 each contribute to the Zn(2+) site.

It belongs to the archaeal Rpo10/eukaryotic RPB10 RNA polymerase subunit family. Part of the RNA polymerase complex. The cofactor is Zn(2+).

It is found in the cytoplasm. It catalyses the reaction RNA(n) + a ribonucleoside 5'-triphosphate = RNA(n+1) + diphosphate. Its function is as follows. DNA-dependent RNA polymerase (RNAP) catalyzes the transcription of DNA into RNA using the four ribonucleoside triphosphates as substrates. The protein is DNA-directed RNA polymerase subunit Rpo10 of Methanoculleus marisnigri (strain ATCC 35101 / DSM 1498 / JR1).